Consider the following 612-residue polypeptide: UvrABC system protein C (612 aa).

In terms of domain architecture, GIY-YIG spans 20–98 (THSGVYRMLD…IKQHRPKYNI (79 aa)). Positions 208–243 (STVLEEISAKMYQASEDMEYEKAQVYRDQLVVLRKL) constitute a UVR domain.

The protein belongs to the UvrC family. Interacts with UvrB in an incision complex.

The protein localises to the cytoplasm. In terms of biological role, the UvrABC repair system catalyzes the recognition and processing of DNA lesions. UvrC both incises the 5' and 3' sides of the lesion. The N-terminal half is responsible for the 3' incision and the C-terminal half is responsible for the 5' incision. This Francisella tularensis subsp. novicida (strain U112) protein is UvrABC system protein C.